A 214-amino-acid polypeptide reads, in one-letter code: Attacin (214 aa).

The N-terminal stretch at 1–19 (MSKSVALLLLCACLASGRH) is a signal peptide. Positions 20–26 (VPTRARR) are excised as a propeptide.

This sequence belongs to the attacin/sarcotoxin-2 family. In terms of tissue distribution, highest expression in fat body and hemocytes and to a much lesser extent in Malpighian tubules, silk gland and midgut.

The protein resides in the secreted. Functionally, hemolymph antibacterial protein. Has a wide spectrum of activity against both Gram-positive and Gram-negative bacteria. The protein is Attacin of Bombyx mori (Silk moth).